A 142-amino-acid polypeptide reads, in one-letter code: Transcriptional regulator MraZ (142 aa).

SpoVT-AbrB domains are found at residues A5 to E51 and A77 to T120.

Belongs to the MraZ family. Forms oligomers.

The protein localises to the cytoplasm. The protein resides in the nucleoid. The polypeptide is Transcriptional regulator MraZ (Ralstonia pickettii (strain 12J)).